We begin with the raw amino-acid sequence, 775 residues long: Dipeptidyl peptidase 4 (775 aa).

An N-terminal signal peptide occupies residues 1 to 15 (MKLLSLLMLAGIAQA). 4 N-linked (GlcNAc...) asparagine glycosylation sites follow: Asn81, Asn111, Asn154, and Asn219. Residues Ser613, Asp690, and His725 each act as charge relay system in the active site.

This sequence belongs to the peptidase S9B family.

It is found in the secreted. The catalysed reaction is Release of an N-terminal dipeptide, Xaa-Yaa-|-Zaa-, from a polypeptide, preferentially when Yaa is Pro, provided Zaa is neither Pro nor hydroxyproline.. In terms of biological role, extracellular dipeptidyl-peptidase which removes N-terminal dipeptides sequentially from polypeptides having unsubstituted N-termini provided that the penultimate residue is proline. Contributes to pathogenicity. This is Dipeptidyl peptidase 4 (DPP4) from Trichophyton rubrum (Athlete's foot fungus).